The primary structure comprises 279 residues: Fatty acid metabolism regulator protein (279 aa).

Residues 6–74 (KSPAGFAEKY…HGKPTKVNQF (69 aa)) form the HTH gntR-type domain. Residues 34-53 (ERELSELIGVTRTTLREVLQ) constitute a DNA-binding region (H-T-H motif).

In terms of assembly, homodimer.

Its subcellular location is the cytoplasm. Multifunctional regulator of fatty acid metabolism. This Vibrio cholerae serotype O1 (strain ATCC 39541 / Classical Ogawa 395 / O395) protein is Fatty acid metabolism regulator protein.